The chain runs to 244 residues: tRNA pseudouridine synthase A (244 aa).

The active-site Nucleophile is aspartate 52. Tyrosine 110 lines the substrate pocket.

This sequence belongs to the tRNA pseudouridine synthase TruA family. As to quaternary structure, homodimer.

The enzyme catalyses uridine(38/39/40) in tRNA = pseudouridine(38/39/40) in tRNA. Formation of pseudouridine at positions 38, 39 and 40 in the anticodon stem and loop of transfer RNAs. The sequence is that of tRNA pseudouridine synthase A from Clostridium botulinum (strain Eklund 17B / Type B).